We begin with the raw amino-acid sequence, 345 residues long: MSEMTYKDAGVDIDKEAFAVRAIRDVLEKYKVEPEGCREVEGIGHYAAVLEVHGELLTLNVDGVGSKVLVAQLVGRYDTVGIDAIAMNANDAVCLGARPLAFLDYLAMEDPDPDVCAEIAEGLGKGAREAGAPIVGGELATLPEVIRGKEEGRGFDLVVACLGRVEGDPITGEDVEPGDAIVGLRSSGIHSNGLTLARKVLLSEYDVHDELPHGRTVAEELLEPTRIYVRPVMEVLRDYEVRGIAHITGGGVENLKRLRDDVRYVLDDPFEPHPVFEIIRELGNVPVEEMYRTFNMGMGMALIVPEEEAEDVVDTVSKHVEAKIVGHVEEGRGVVVHMDGHEVKL.

This sequence belongs to the AIR synthase family.

The protein localises to the cytoplasm. The enzyme catalyses 2-formamido-N(1)-(5-O-phospho-beta-D-ribosyl)acetamidine + ATP = 5-amino-1-(5-phospho-beta-D-ribosyl)imidazole + ADP + phosphate + H(+). It participates in purine metabolism; IMP biosynthesis via de novo pathway; 5-amino-1-(5-phospho-D-ribosyl)imidazole from N(2)-formyl-N(1)-(5-phospho-D-ribosyl)glycinamide: step 2/2. This is Phosphoribosylformylglycinamidine cyclo-ligase from Methanopyrus kandleri (strain AV19 / DSM 6324 / JCM 9639 / NBRC 100938).